Reading from the N-terminus, the 93-residue chain is Co-chaperonin GroES 2 (93 aa).

Positions 1–20 (MQPLGERIVVQREESETTTA) are disordered.

It belongs to the GroES chaperonin family. Heptamer of 7 subunits arranged in a ring. Interacts with the chaperonin GroEL.

The protein localises to the cytoplasm. Its function is as follows. Together with the chaperonin GroEL, plays an essential role in assisting protein folding. The GroEL-GroES system forms a nano-cage that allows encapsulation of the non-native substrate proteins and provides a physical environment optimized to promote and accelerate protein folding. GroES binds to the apical surface of the GroEL ring, thereby capping the opening of the GroEL channel. This is Co-chaperonin GroES 2 from Rhodopirellula baltica (strain DSM 10527 / NCIMB 13988 / SH1).